The primary structure comprises 730 residues: MEELIVELRLFLELLDHEYLTSTVREKKAVITNILLRIQSSKGFDVKDHAQKQETANSLPAPPQMPLPEIPQPWLPPDSGPPPLPTSSLPEGYYEEAVPLSPGKAPEYITSNYDSDAMSSSYESYDEEEEDGKGKKTRHQWPSEEASMDLVKDAKICAFLLRKKRFGQWTKLLCVIKDTKLLCYKSSKDQQPQMELPLQGCNITYIPKDSKKKKHELKITQQGTDPLVLAVQSKEQAEQWLKVIKEAYSGCSGPVDSECPPPPSSPVHKAELEKKLSSERPSSDGEGVVENGITTCNGKEQVKRKKSSKSEAKGTVSKVTGKKITKIISLGKKKPSTDEQTSSAEEDVPTCGYLNVLSNSRWRERWCRVKDNKLIFHKDRTDLKTHIVSIPLRGCEVIPGLDSKHPLTFRLLRNGQEVAVLEASSSEDMGRWIGILLAETGSSTDPEALHYDYIDVEMSASVIQTAKQTFCFMNRRVISANPYLGGTSNGYAHPSGTALHYDDVPCINGSLKGKKPPVASNGVTGKGKTLSSQPKKADPAAVVKRTGSNAAQYKYGKNRVEADAKRLQTKEEELLKRKEALRNRLAQLRKERKDLRAAIEVNAGRKPQAILEEKLKQLEEECRQKEAERVSLELELTEVKESLKKALAGGVTLGLAIEPKSGTSSPQSPVFRHRTLENSPISSCDTSDTEGPVPVNSAAVLKKSQAAPGSSPCRGHVLRKAKEWELKNGT.

At M1 the chain carries N-acetylmethionine. The tract at residues 47-91 (KDHAQKQETANSLPAPPQMPLPEIPQPWLPPDSGPPPLPTSSLPE) is disordered. Over residues 60-85 (PAPPQMPLPEIPQPWLPPDSGPPPLP) the composition is skewed to pro residues. Positions 71–74 (PQPW) match the SH3-binding motif. An SH2-binding 1 motif is present at residues 94-97 (YEEA). Positions 119 to 140 (SSSYESYDEEEEDGKGKKTRHQ) are disordered. In terms of domain architecture, PH 1 spans 153 to 249 (DAKICAFLLR…WLKVIKEAYS (97 aa)). Residues 252-292 (SGPVDSECPPPPSSPVHKAELEKKLSSERPSSDGEGVVENG) are disordered. Positions 268–283 (HKAELEKKLSSERPSS) are enriched in basic and acidic residues. S282 and S283 each carry phosphoserine. The PH 2 domain occupies 347 to 441 (DVPTCGYLNV…WIGILLAETG (95 aa)). Residues 451–456 (YDYIDV) carry the SH2-binding 2 motif. The interval 512 to 537 (KGKKPPVASNGVTGKGKTLSSQPKKA) is disordered. A Phosphoserine modification is found at S548. Positions 557 to 648 (KNRVEADAKR…VKESLKKALA (92 aa)) form a coiled coil. The interval 594 to 637 (DLRAAIEVNAGRKPQAILEEKLKQLEEECRQKEAERVSLELELT) is interaction with F-actin. Residues S664, S665, and S668 each carry the phosphoserine modification. T675 bears the Phosphothreonine mark. Residues S679 and S687 each carry the phosphoserine modification.

In terms of assembly, monomer and homomultimer. Interacts via its C-terminus with F-actin; probably involving AFAP1 multimers. Interacts with activated SRC SH3-SH2 domains. Interacts via its PH 1 domain with PRKCA, PRKCB and PRKCI. Phosphorylated on tyrosine residues by SRC. Low expression in normal breast epithelial cell line MCF-10A and in tumorigenic breast cancer cell lines MCF-7, T-47D and ZR-75-1. Highly expressed in the invasive breast cancer cell lines MDA-MB-231 and MDA-MB-435. Overexpressed in prostate carcinoma.

The protein resides in the cytoplasm. The protein localises to the cytoskeleton. It localises to the stress fiber. Its function is as follows. Can cross-link actin filaments into both network and bundle structures. May modulate changes in actin filament integrity and induce lamellipodia formation. May function as an adapter molecule that links other proteins, such as SRC and PKC to the actin cytoskeleton. Seems to play a role in the development and progression of prostate adenocarcinoma by regulating cell-matrix adhesions and migration in the cancer cells. This chain is Actin filament-associated protein 1 (AFAP1), found in Homo sapiens (Human).